The primary structure comprises 115 residues: Putative TGFB1-induced anti-apoptotic factor 1 (115 aa).

As to expression, not detectable in normal kidney and liver. Up-regulated in chronic and acute allograft rejection: expressed in the inflammatory infiltrate and in tubular epithelial cells.

The protein resides in the nucleus. Inhibits the cytotoxic effects of TNF-alpha and overexpressed TNF receptor adapters TRADD, FADD, and RIPK1. Involved in TGF-beta1 inhibition of IkappaB-alpha expression and suppression of TNF-mediated IkappaB-alpha degradation. In Homo sapiens (Human), this protein is Putative TGFB1-induced anti-apoptotic factor 1 (MYO18A).